The primary structure comprises 117 residues: Large ribosomal subunit protein uL18 (117 aa).

This sequence belongs to the universal ribosomal protein uL18 family. In terms of assembly, part of the 50S ribosomal subunit; part of the 5S rRNA/L5/L18/L25 subcomplex. Contacts the 5S and 23S rRNAs.

Functionally, this is one of the proteins that bind and probably mediate the attachment of the 5S RNA into the large ribosomal subunit, where it forms part of the central protuberance. The sequence is that of Large ribosomal subunit protein uL18 from Yersinia enterocolitica serotype O:8 / biotype 1B (strain NCTC 13174 / 8081).